Consider the following 64-residue polypeptide: Disintegrin (64 aa).

One can recognise a Disintegrin domain in the interval 1–64 (NSVHPCCDPV…SDCPRNRYNH (64 aa)). 4 cysteine pairs are disulfide-bonded: C6–C29, C20–C26, C25–C50, and C38–C57. A Cell attachment site; atypical (MLD) motif is present at residues 42–44 (MLD).

This sequence belongs to the disintegrin family. Dimeric disintegrin subfamily. As to quaternary structure, heterodimer; disulfide-linked. Expressed by the venom gland.

It is found in the secreted. In terms of biological role, inhibits adhesion of cells expressing alpha-4/beta-1 (ITGA4/ITGB1) and alpha-4/beta-7 (ITGA4/ITGB7) integrins to the natural ligands vascular cell adhesion molecule 1 (VCAM-1) and mucosal addressin cell adhesion molecule 1 (MADCAM-1). The protein is Disintegrin of Echis carinatus (Saw-scaled viper).